A 588-amino-acid polypeptide reads, in one-letter code: MNGFDAVLLVAVLLLTVVVVGAVLVGVRAVRGLAGTSRPDDPAFIAEKDRQEQSLAALRSAAEEANSTIDAAKSAAAAARTEAAAARAEAKAARAEARRVLDGARAEAEAILERVHKQAETEAEQLRTAARRSGEREAAVLAVTTRDQAAEVERRAVRMDDRERLHTEEVERLAERDRQLSAANAALEARESALAERDRELEQAEQRRRRELERVAGLTAEAARGELVEAIEAQAKREAALRVRDIEAEARSTGEERARHIVVDAIQRVASEQTAESVVSVLHLPGDEMKGRIIGREGRNIRTFESITGVNLIIDDTPEAVLLSCFDPVRREVGRLTLEKLVLDGRIHPHRIEEVHDLARQEVAQLCQRAAEDALVEVGITEIHPELVGLLGRLRYRTSYGQNVLKHLVESAHIAGIMAAELRLDVPTIKRCAFLHDIGKALTHEVEGSHAIVGADVARRYGESEDVVHAIEAHHNEVPPQTVEAVLTQASDACSGGRPGARRESLEAYVRRLERIEEIAGGKLGVERVFAMQAGREVRVMVRPDDVDDLSASMLARDVAKQIEEELTYPGQIRVTVVRESRVTEIAR.

Residues 7 to 27 (VLLVAVLLLTVVVVGAVLVGV) traverse the membrane as a helical segment. The KH domain occupies 278–359 (VVSVLHLPGD…HRIEEVHDLA (82 aa)). An HD domain is found at 404–497 (VLKHLVESAH…TQASDACSGG (94 aa)).

The protein belongs to the RNase Y family.

It is found in the cell membrane. In terms of biological role, endoribonuclease that initiates mRNA decay. This is Ribonuclease Y from Salinispora tropica (strain ATCC BAA-916 / DSM 44818 / JCM 13857 / NBRC 105044 / CNB-440).